A 531-amino-acid polypeptide reads, in one-letter code: Laccase-4 (531 aa).

The first 19 residues, 1-19, serve as a signal peptide directing secretion; the sequence is MLSSITLLPLLAAVSTPAF. Plastocyanin-like domains are found at residues 23–146, 158–315, and 384–507; these read RNYK…LVIY, VDDA…LHYE, and SLPT…VSSR. N66 carries N-linked (GlcNAc...) asparagine glycosylation. Positions 83 and 85 each coordinate Cu cation. A disulfide bridge links C104 with C528. N-linked (GlcNAc...) asparagine glycosylation is present at N109. Positions 128 and 130 each coordinate Cu cation. Residues N186, N231, N280, and N395 are each glycosylated (N-linked (GlcNAc...) asparagine). Residues H427, H430, H432, H479, C480, and H481 each coordinate Cu cation.

It belongs to the multicopper oxidase family. In terms of assembly, homodimer. The cofactor is Cu cation. In mycelia, at a higher level than LCC1, LCC2 and LCC3.

Its subcellular location is the secreted. The enzyme catalyses 4 hydroquinone + O2 = 4 benzosemiquinone + 2 H2O. Its function is as follows. Lignin degradation and detoxification of lignin-derived products. The polypeptide is Laccase-4 (LCC4) (Thanatephorus cucumeris (Black scurf of potato)).